We begin with the raw amino-acid sequence, 207 residues long: Large ribosomal subunit protein uL4 (207 aa).

Residues 48–70 are disordered; the sequence is KAQKTRSEVSGGGAKPWRQKGTG.

This sequence belongs to the universal ribosomal protein uL4 family. In terms of assembly, part of the 50S ribosomal subunit.

In terms of biological role, one of the primary rRNA binding proteins, this protein initially binds near the 5'-end of the 23S rRNA. It is important during the early stages of 50S assembly. It makes multiple contacts with different domains of the 23S rRNA in the assembled 50S subunit and ribosome. Forms part of the polypeptide exit tunnel. The protein is Large ribosomal subunit protein uL4 of Francisella tularensis subsp. mediasiatica (strain FSC147).